We begin with the raw amino-acid sequence, 340 residues long: UPF0324 membrane protein BA_5405/GBAA_5405/BAS5024 (340 aa).

10 helical membrane passes run 13–35, 40–59, 99–118, 128–150, 157–179, 189–211, 218–240, 255–277, 279–301, and 316–338; these read FGFS…LAEL, IMGQ…AAIG, VLVI…YGLT, GILT…APQV, TAVG…TLLY, YGVF…APGG, AVIV…GVWF, LPIP…GIIP, VVAG…GLGL, and FVAG…YALG.

It belongs to the UPF0324 family.

It localises to the cell membrane. In Bacillus anthracis, this protein is UPF0324 membrane protein BA_5405/GBAA_5405/BAS5024.